The sequence spans 177 residues: MRAEARAAVGELLEAAGLSPGQVLVVGCSTSEVIGRRIGTAGSEAVAGAILEPLLEATQAAGVHLAVQCCEHLNRALVVERAAAERYDWERVTVVPVPRAGGALAARAMRRLPDAVVVEEIKADAGLDIGLTLIGMHLRRVAVPVRLKTAAIGHARVVAARTRPKLIGGARAVYEMQ.

Belongs to the UPF0340 family.

This Symbiobacterium thermophilum (strain DSM 24528 / JCM 14929 / IAM 14863 / T) protein is UPF0340 protein STH78.